Reading from the N-terminus, the 317-residue chain is Porphobilinogen deaminase (317 aa).

S-(dipyrrolylmethanemethyl)cysteine is present on cysteine 240.

Belongs to the HMBS family. Monomer. Dipyrromethane is required as a cofactor.

The catalysed reaction is 4 porphobilinogen + H2O = hydroxymethylbilane + 4 NH4(+). Its pathway is porphyrin-containing compound metabolism; protoporphyrin-IX biosynthesis; coproporphyrinogen-III from 5-aminolevulinate: step 2/4. Its function is as follows. Tetrapolymerization of the monopyrrole PBG into the hydroxymethylbilane pre-uroporphyrinogen in several discrete steps. This chain is Porphobilinogen deaminase, found in Nitratidesulfovibrio vulgaris (strain DSM 19637 / Miyazaki F) (Desulfovibrio vulgaris).